A 163-amino-acid chain; its full sequence is MDPGRSHIETIIESSTHKFILFDEPTEETIPYFKDLMKKNSCINIVRCCEINYDASLFEGVKIHELCFKDGNVPPKDIIERWLEILKQAFIENGKQKTTVGIHCIAGLGRTPLLVCIALIEDGMKPLQAVEFVRSKRKNAINSPQIKFLKEYKASKKAGCKIM.

The Tyrosine-protein phosphatase domain maps to 10-161 (TIIESSTHKF…YKASKKAGCK (152 aa)). Cys49 and Cys104 are joined by a disulfide. Catalysis depends on Asp70, which acts as the Proton donor. Cys104 functions as the Phosphocysteine intermediate in the catalytic mechanism. 105–110 (IAGLGR) contributes to the phosphate binding site. Arg110 is a substrate binding site. The residue at position 160 (Cys160) is a Cysteine methyl ester. Cys160 carries S-farnesyl cysteine lipidation. A propeptide spans 161 to 163 (KIM) (removed in mature form).

The protein belongs to the protein-tyrosine phosphatase family.

It is found in the membrane. The catalysed reaction is O-phospho-L-tyrosyl-[protein] + H2O = L-tyrosyl-[protein] + phosphate. The polypeptide is Probable protein tyrosine phosphatase type IVA B (Dictyostelium discoideum (Social amoeba)).